The sequence spans 618 residues: Polyamine transporter TPO5 (618 aa).

Residues 1 to 60 lie on the Cytoplasmic side of the membrane; the sequence is MPEYTLLADNIRENIVHFDPNGLFDNLHTIVHEDDSQENEEAEHFNYDQVLDKSLLSRGS. The chain crosses the membrane as a helical span at residues 61–84; that stretch reads IVGLGLGLMSPVLGMCTSMAIGLI. At 85–90 the chain is on the extracellular side; that stretch reads NGGPLT. The helical transmembrane segment at 91–110 threads the bilayer; sequence IMLGFLISGVCIWFSSLSLG. Topologically, residues 111–131 are cytoplasmic; that stretch reads EIVSKFPMELHVGSAMLAPEK. Residues 132 to 148 form a helical membrane-spanning segment; sequence LKLVCSWYTGWLMLIGN. The Extracellular portion of the chain corresponds to 149–154; that stretch reads WTMSTS. A helical transmembrane segment spans residues 155 to 171; the sequence is ITFAGAQLTISLILMTN. The Cytoplasmic segment spans residues 172 to 179; sequence SNLISEAH. Residues 180–200 traverse the membrane as a helical segment; the sequence is LIFYTVIVFYLVVTVVGLVNL. The Extracellular segment spans residues 201 to 211; it reads KFARFIETINK. A helical membrane pass occupies residues 212-231; that stretch reads VCVYWIIYAIIFIDILLLVF. The Cytoplasmic segment spans residues 232–297; it reads HKGKFRSLKY…EKDIPRGMSN (66 aa). A helical membrane pass occupies residues 298-317; sequence AVLLSAFSGVIFLIPIMLIL. At 318 to 342 the chain is on the extracellular side; the sequence is PDNDLLFTNHKVLPIVNIFTKSTDS. Residues 343-367 form a helical membrane-spanning segment; it reads VVLSFFLVLLILGNLLFSGIGSITT. Over 368–402 the chain is Cytoplasmic; the sequence is SSRAVYSFSRDQAIPYYDKWTYVEPDSQSKVPKNS. A helical membrane pass occupies residues 403-419; sequence VVLSMIISYFLGLLALI. Topologically, residues 420-425 are extracellular; sequence STAAFN. The helical transmembrane segment at 426-449 threads the bilayer; sequence AFIGAAVLCLCSATFIPLVLVLFT. Residues 450 to 464 are Cytoplasmic-facing; that stretch reads RRRAIRSAPVKIRYK. Residues 465-486 form a helical membrane-spanning segment; that stretch reads FGWFINIVSIVWLLLSMVSVCL. At 487-498 the chain is on the extracellular side; the sequence is PTQVPVTFKTMN. A helical membrane pass occupies residues 499–516; the sequence is YALMVYVFCILVITGLYF. At 517-618 the chain is on the cytoplasmic side; sequence KWGKYNFRLP…DLADDRRYDI (102 aa). S569 carries the phosphoserine modification. The interval 576 to 618 is disordered; that stretch reads VHPKSSTENPFEENEENVITDYGDEHHTAEQEFDLADDRRYDI. Basic and acidic residues predominate over residues 598-618; that stretch reads GDEHHTAEQEFDLADDRRYDI.

The protein belongs to the amino acid-polyamine-organocation (APC) superfamily.

It localises to the golgi apparatus membrane. Functionally, required for polyamine transport. Transports putrescine effectively and spermidine less effectively. The chain is Polyamine transporter TPO5 (TPO5) from Saccharomyces cerevisiae (strain ATCC 204508 / S288c) (Baker's yeast).